Reading from the N-terminus, the 265-residue chain is Phosphonates import ATP-binding protein PhnC (265 aa).

One can recognise an ABC transporter domain in the interval 3-247 (LRLKQAFLHH…MLDTLYANEQ (245 aa)). Residue 36–43 (GPSGAGKS) participates in ATP binding.

The protein belongs to the ABC transporter superfamily. Phosphonates importer (TC 3.A.1.9.1) family. As to quaternary structure, the complex is composed of two ATP-binding proteins (PhnC), two transmembrane proteins (PhnE) and a solute-binding protein (PhnD).

It localises to the cell inner membrane. It catalyses the reaction phosphonate(out) + ATP + H2O = phosphonate(in) + ADP + phosphate + H(+). In terms of biological role, part of the ABC transporter complex PhnCDE involved in phosphonates import. Responsible for energy coupling to the transport system. The protein is Phosphonates import ATP-binding protein PhnC of Pseudomonas fluorescens (strain Pf0-1).